The primary structure comprises 370 residues: Putative F-box/kelch-repeat protein At3g46050 (370 aa).

The F-box domain maps to 15–61 (PTSFSSLPDDIVLNCLARVSRFHYPTLSLVCKGFRSLLDSRELHATR). Kelch repeat units lie at residues 119-165 (KIYI…VIND) and 167-212 (IYVI…VPGS).

In Arabidopsis thaliana (Mouse-ear cress), this protein is Putative F-box/kelch-repeat protein At3g46050.